The primary structure comprises 365 residues: Putative glutamate--cysteine ligase 2-3 (365 aa).

The protein belongs to the glutamate--cysteine ligase type 2 family. YbdK subfamily.

It catalyses the reaction L-cysteine + L-glutamate + ATP = gamma-L-glutamyl-L-cysteine + ADP + phosphate + H(+). Its function is as follows. ATP-dependent carboxylate-amine ligase which exhibits weak glutamate--cysteine ligase activity. The sequence is that of Putative glutamate--cysteine ligase 2-3 from Mycolicibacterium smegmatis (strain ATCC 700084 / mc(2)155) (Mycobacterium smegmatis).